Reading from the N-terminus, the 155-residue chain is Keratin-associated protein 4-7 (155 aa).

A run of 20 repeats spans residues 5–9 (CCGSV), 24–28 (CCRPS), 29–33 (CCQTT), 34–38 (CCRTT), 44–48 (CCVSS), 49–53 (CCRPQ), 54–58 (CCQSV), 59–63 (CCQPT), 64–68 (CCRPT), 69–73 (CCETT), 74–78 (CCHPR), 79–83 (CCISS), 84–88 (CCRPS), 89–93 (CCMSS), 94–98 (CCKPQ), 99–103 (CCQSV), 104–108 (CCQPT), 109–113 (CCRPS), 114–118 (CCRPC), and 119–123 (CCLRP). Residues 5–123 (CCGSVCSDQG…CCRPCCCLRP (119 aa)) form a 20 X 5 AA repeats of C-C-[GIKRQVHEML]-[SPTRV]-[STVQRCP] region.

The protein belongs to the KRTAP type 4 family. As to quaternary structure, interacts with hair keratins. Expressed in the hair follicles.

In terms of biological role, in the hair cortex, hair keratin intermediate filaments are embedded in an interfilamentous matrix, consisting of hair keratin-associated proteins (KRTAP), which are essential for the formation of a rigid and resistant hair shaft through their extensive disulfide bond cross-linking with abundant cysteine residues of hair keratins. The matrix proteins include the high-sulfur and high-glycine-tyrosine keratins. The sequence is that of Keratin-associated protein 4-7 (KRTAP4-7) from Homo sapiens (Human).